A 166-amino-acid polypeptide reads, in one-letter code: UPF0336 protein MT0525.1 (166 aa).

The 124-residue stretch at 8–131 (QTLIGKHYRA…VLAEIRSEVT (124 aa)) folds into the MaoC-like domain.

It belongs to the UPF0336 family.

This is UPF0336 protein MT0525.1 from Mycobacterium tuberculosis (strain CDC 1551 / Oshkosh).